Consider the following 486-residue polypeptide: Histidine--tRNA ligase, chloroplastic/mitochondrial (486 aa).

This sequence belongs to the class-II aminoacyl-tRNA synthetase family.

The protein localises to the plastid. It is found in the chloroplast. Its subcellular location is the mitochondrion. The enzyme catalyses tRNA(His) + L-histidine + ATP = L-histidyl-tRNA(His) + AMP + diphosphate + H(+). The sequence is that of Histidine--tRNA ligase, chloroplastic/mitochondrial from Arabidopsis thaliana (Mouse-ear cress).